A 130-amino-acid polypeptide reads, in one-letter code: Methylglyoxal synthase (130 aa).

The region spanning 1 to 130 (MSTPRIALIA…DLARRLTANA (130 aa)) is the MGS-like domain. Residues histidine 11, lysine 15, 37 to 40 (TGTT), and 57 to 58 (SG) contribute to the substrate site. Aspartate 63 functions as the Proton donor/acceptor in the catalytic mechanism. Residue histidine 90 coordinates substrate.

The protein belongs to the methylglyoxal synthase family.

The enzyme catalyses dihydroxyacetone phosphate = methylglyoxal + phosphate. In terms of biological role, catalyzes the formation of methylglyoxal from dihydroxyacetone phosphate. This is Methylglyoxal synthase from Burkholderia mallei (strain NCTC 10247).